The sequence spans 85 residues: Alpha-defensin 11 (85 aa).

The signal sequence occupies residues 1–11 (ALVLLAFQVQA). A propeptide spanning residues 12–50 (DPIQNTDEETKTEEQPGEEDQAVSVSFGDPEGTSLQEES) is cleaved from the precursor. Positions 14-46 (IQNTDEETKTEEQPGEEDQAVSVSFGDPEGTSL) are disordered. 3 disulfides stabilise this stretch: C56-C84, C58-C73, and C63-C83.

Belongs to the alpha-defensin family. As to expression, paneth cells of the small bowel.

The protein localises to the secreted. Functionally, probably contributes to the antimicrobial barrier function of the small bowel mucosa. This Mus musculus (Mouse) protein is Alpha-defensin 11 (Defa11).